Reading from the N-terminus, the 176-residue chain is Translation initiation factor IF-3 (176 aa).

It belongs to the IF-3 family. Monomer.

It localises to the cytoplasm. Its function is as follows. IF-3 binds to the 30S ribosomal subunit and shifts the equilibrium between 70S ribosomes and their 50S and 30S subunits in favor of the free subunits, thus enhancing the availability of 30S subunits on which protein synthesis initiation begins. This chain is Translation initiation factor IF-3, found in Nitratidesulfovibrio vulgaris (strain DSM 19637 / Miyazaki F) (Desulfovibrio vulgaris).